The chain runs to 89 residues: Small ribosomal subunit protein uS15 (89 aa).

Residues 1 to 11 (MSIAAERKAEV) show a composition bias toward basic and acidic residues. The disordered stretch occupies residues 1–25 (MSIAAERKAEVIKTSANKPGDTGSP).

The protein belongs to the universal ribosomal protein uS15 family. As to quaternary structure, part of the 30S ribosomal subunit. Forms a bridge to the 50S subunit in the 70S ribosome, contacting the 23S rRNA.

Its function is as follows. One of the primary rRNA binding proteins, it binds directly to 16S rRNA where it helps nucleate assembly of the platform of the 30S subunit by binding and bridging several RNA helices of the 16S rRNA. Functionally, forms an intersubunit bridge (bridge B4) with the 23S rRNA of the 50S subunit in the ribosome. This chain is Small ribosomal subunit protein uS15, found in Nitrobacter winogradskyi (strain ATCC 25391 / DSM 10237 / CIP 104748 / NCIMB 11846 / Nb-255).